We begin with the raw amino-acid sequence, 443 residues long: Ribosomal protein uS12 methylthiotransferase RimO (443 aa).

Residues 8 to 118 (PKVGFVSLGC…VVNAVHEVVP (111 aa)) enclose the MTTase N-terminal domain. Positions 17, 53, 82, 151, 155, and 158 each coordinate [4Fe-4S] cluster. The region spanning 137 to 375 (LTPRHYAYLK…MAHQQAISTA (239 aa)) is the Radical SAM core domain. The 66-residue stretch at 378–443 (QLRIGKEIEV…DEYDMWAEPI (66 aa)) folds into the TRAM domain.

Belongs to the methylthiotransferase family. RimO subfamily. Requires [4Fe-4S] cluster as cofactor.

Its subcellular location is the cytoplasm. It carries out the reaction L-aspartate(89)-[ribosomal protein uS12]-hydrogen + (sulfur carrier)-SH + AH2 + 2 S-adenosyl-L-methionine = 3-methylsulfanyl-L-aspartate(89)-[ribosomal protein uS12]-hydrogen + (sulfur carrier)-H + 5'-deoxyadenosine + L-methionine + A + S-adenosyl-L-homocysteine + 2 H(+). Functionally, catalyzes the methylthiolation of an aspartic acid residue of ribosomal protein uS12. This Pseudomonas putida (strain GB-1) protein is Ribosomal protein uS12 methylthiotransferase RimO.